Here is a 785-residue protein sequence, read N- to C-terminus: Disintegrin and metalloproteinase domain-containing protein B (785 aa).

The signal sequence occupies residues 1-26 (MRFLKSALPFVASALSLLSVQAAARS). At 27-703 (QEPSAIQHVS…GSWVEQHKNL (677 aa)) the chain is on the extracellular side. In terms of domain architecture, Peptidase M12B spans 279 to 507 (KQVALVGIAA…NSVKSSCLSD (229 aa)). 3 N-linked (GlcNAc...) asparagine glycosylation sites follow: Asn322, Asn329, and Asn355. 2 disulfides stabilise this stretch: Cys398-Cys492 and Cys446-Cys464. A Zn(2+)-binding site is contributed by His429. Glu430 is an active-site residue. His433 and His439 together coordinate Zn(2+). Positions 516–605 (GSQCGNGIVE…TCPADSFKKD (90 aa)) constitute a Disintegrin domain. N-linked (GlcNAc...) asparagine glycans are attached at residues Asn561, Asn593, and Asn640. The cysteines at positions 577 and 597 are disulfide-linked. A helical transmembrane segment spans residues 704 to 724 (VIGVACGVGGLLVLSILWCMI). The Cytoplasmic portion of the chain corresponds to 725–785 (NRCRRARTVV…GPYQSATRYA (61 aa)). A disordered region spans residues 737-785 (PPMRPWPGPMPPPPPQMGQWAGPNRGYQGLRAEPPPPYPGPYQSATRYA). Residues 739 to 752 (MRPWPGPMPPPPPQ) show a composition bias toward pro residues.

Zn(2+) serves as cofactor.

It localises to the membrane. Its function is as follows. Probable zinc protease. The polypeptide is Disintegrin and metalloproteinase domain-containing protein B (ADM-B) (Aspergillus fumigatus (strain ATCC MYA-4609 / CBS 101355 / FGSC A1100 / Af293) (Neosartorya fumigata)).